Consider the following 238-residue polypeptide: 1-(5-phosphoribosyl)-5-[(5-phosphoribosylamino)methylideneamino] imidazole-4-carboxamide isomerase (238 aa).

Aspartate 8 (proton acceptor) is an active-site residue. The active-site Proton donor is the aspartate 129.

It belongs to the HisA/HisF family.

The protein resides in the cytoplasm. The enzyme catalyses 1-(5-phospho-beta-D-ribosyl)-5-[(5-phospho-beta-D-ribosylamino)methylideneamino]imidazole-4-carboxamide = 5-[(5-phospho-1-deoxy-D-ribulos-1-ylimino)methylamino]-1-(5-phospho-beta-D-ribosyl)imidazole-4-carboxamide. It participates in amino-acid biosynthesis; L-histidine biosynthesis; L-histidine from 5-phospho-alpha-D-ribose 1-diphosphate: step 4/9. This chain is 1-(5-phosphoribosyl)-5-[(5-phosphoribosylamino)methylideneamino] imidazole-4-carboxamide isomerase, found in Paracoccus denitrificans (strain Pd 1222).